The primary structure comprises 240 residues: Large ribosomal subunit protein uL3 (240 aa).

Disordered regions lie at residues 138 to 158 (SISHRSHGSTGGRQDPGKTFK) and 215 to 240 (EAPLPGKFRLANEGAEPAPATESAEG). At Gln-151 the chain carries N5-methylglutamine.

This sequence belongs to the universal ribosomal protein uL3 family. Part of the 50S ribosomal subunit. Forms a cluster with proteins L14 and L19. In terms of processing, methylated by PrmB.

Functionally, one of the primary rRNA binding proteins, it binds directly near the 3'-end of the 23S rRNA, where it nucleates assembly of the 50S subunit. The chain is Large ribosomal subunit protein uL3 from Beijerinckia indica subsp. indica (strain ATCC 9039 / DSM 1715 / NCIMB 8712).